We begin with the raw amino-acid sequence, 184 residues long: Large ribosomal subunit protein uL5c (184 aa).

Belongs to the universal ribosomal protein uL5 family. Part of the 50S ribosomal subunit; contacts the 5S rRNA.

It localises to the plastid. It is found in the chloroplast. Binds 5S rRNA, forms part of the central protuberance of the 50S subunit. The sequence is that of Large ribosomal subunit protein uL5c (rpl5) from Mesostigma viride (Green alga).